A 345-amino-acid polypeptide reads, in one-letter code: MTTTGYIGTYTKKEGKGVYRFQLDEETGKITEVKTGYELEASTYVNQHNHFLYAVTKEGDDCGIASLKIESDGTLSLINKCLASTAGNGCYVSASPDGKYIFEAIYGAGLARIYEANPETGEIVRLIQELAHDYPTGPSERQEQPHVHYLNTTPDEKYVVAMDLGTDKVITYEYGDDGLKVYDTIEFEPGDGPRHITFHENGKHAYVVHELSNIVSTLKYENGHFTEIERHLTIPENFDGDTKLAAVRISHDQNFLYISNRGHDSLAIFKVGDEGATISLVDIVKSGGEFPRDFNITESDDYLVCAHQEGDYALTVFKRDKVTGNIEIVDNQETAPEGVCVQFLR.

It belongs to the cycloisomerase 2 family.

This is an uncharacterized protein from Staphylococcus saprophyticus subsp. saprophyticus (strain ATCC 15305 / DSM 20229 / NCIMB 8711 / NCTC 7292 / S-41).